The sequence spans 935 residues: Progesterone receptor (935 aa).

The disordered stretch occupies residues methionine 1 to serine 49. Positions methionine 1–leucine 164 are AF3; mediates transcriptional activation. Residues methionine 1–isoleucine 568 are modulating, Pro-Rich. Serine 20 carries the phosphoserine modification. Polar residues predominate over residues alanine 32–threonine 44. Residues leucine 55 to leucine 59 carry the LXXL motif 1 motif. Positions arginine 62 to glutamine 158 are disordered. Serine 81 carries the post-translational modification Phosphoserine. The LXXL motif 2 signature appears at leucine 115–tryptophan 119. Residues serine 130 and serine 162 each carry the phosphoserine modification. The tract at residues methionine 165–histidine 305 is mediates transcriptional transrepression. The Nuclear localization signal motif lies at lysine 183–arginine 187. The disordered stretch occupies residues arginine 187–alanine 233. Position 190 is a phosphoserine (serine 190). Residues proline 191 to proline 203 show a composition bias toward polar residues. The residue at position 213 (serine 213) is a Phosphoserine. Positions glutamate 220–aspartate 231 are enriched in acidic residues. Serine 294 is modified (phosphoserine; by MAPK1). A disordered region spans residues serine 328 to proline 365. A compositionally biased stretch (low complexity) spans alanine 335 to serine 356. A Phosphoserine; by MAPK modification is found at serine 345. Lysine 388 is covalently cross-linked (Glycyl lysine isopeptide (Lys-Gly) (interchain with G-Cter in SUMO); alternate). A Glycyl lysine isopeptide (Lys-Gly) (interchain with G-Cter in ubiquitin); alternate cross-link involves residue lysine 388. Positions glutamate 390–serine 452 are disordered. The residue at position 400 (serine 400) is a Phosphoserine; by CDK2. A compositionally biased stretch (pro residues) spans proline 418–arginine 433. The span at proline 434–serine 452 shows a compositional bias: low complexity. An AF1; mediates transcriptional activation region spans residues serine 456–arginine 548. Lysine 533 is covalently cross-linked (Glycyl lysine isopeptide (Lys-Gly) (interchain with G-Cter in SUMO)). 2 NR C4-type zinc fingers span residues cysteine 569–cysteine 589 and cysteine 605–cysteine 629. The segment at residues cysteine 569–phenylalanine 641 is a DNA-binding region (nuclear receptor). The residue at position 678 (serine 678) is a Phosphoserine. In terms of domain architecture, NR LBD spans glutamine 681–isoleucine 915. The segment at leucine 689–lysine 935 is AF2; mediates transcriptional activation. Arginine 768 contributes to the progesterone binding site.

Belongs to the nuclear hormone receptor family. In terms of assembly, interacts with SMARD1 and UNC45A. Interacts with CUEDC2; the interaction promotes ubiquitination, decreases sumoylation, and represses transcriptional activity. Interacts with PIAS3; the interaction promotes sumoylation of PR in a hormone-dependent manner, inhibits DNA-binding, and alters nuclear export. Interacts with SP1; the interaction requires ligand-induced phosphorylation on Ser-345 by ERK1/2-MAPK. Interacts with PRMT2. Interacts with NCOA2 and NCOA1. Interacts with KLF9. Interacts with GTF2B. In terms of processing, phosphorylated on multiple serine sites. Several of these sites are hormone-dependent. Phosphorylation on Ser-294 is highly hormone-dependent and modulates ubiquitination and sumoylation on Lys-388. Phosphorylation on Ser-345 also requires induction by hormone. Basal phosphorylation on Ser-81, Ser-162, Ser-190 and Ser-400 is increased in response to progesterone and can be phosphorylated in vitro by the CDK2-A1 complex. Increased levels of phosphorylation on Ser-400 also in the presence of EGF, heregulin, IGF, PMA and FBS. Phosphorylation at this site by CDK2 is ligand-independent, and increases nuclear translocation and transcriptional activity. Phosphorylation at Ser-162 and Ser-294, but not at Ser-190, is impaired during the G(2)/M phase of the cell cycle. Phosphorylation on Ser-345 by ERK1/2 MAPK is required for interaction with SP1. Post-translationally, sumoylation is hormone-dependent and represses transcriptional activity. Sumoylation on all three sites is enhanced by PIAS3. Desumoylated by SENP1. Sumoylation on Lys-388, the main site of sumoylation, is repressed by ubiquitination on the same site, and modulated by phosphorylation at Ser-294. Ubiquitination is hormone-dependent and represses sumoylation on the same site. Promoted by MAPK-mediated phosphorylation on Ser-294. Ubiquitinated by UBR5, leading to its degradation: UBR5 specifically recognizes and binds ligand-bound PGR when it is not associated with coactivators (NCOAs). In presence of NCOAs, the UBR5-degron is not accessible, preventing its ubiquitination and degradation. In terms of processing, palmitoylated by ZDHHC7 and ZDHHC21. Palmitoylation is required for plasma membrane targeting and for rapid intracellular signaling via ERK and AKT kinases and cAMP generation.

Its subcellular location is the nucleus. The protein localises to the cytoplasm. Its function is as follows. The steroid hormones and their receptors are involved in the regulation of eukaryotic gene expression and affect cellular proliferation and differentiation in target tissues. Transcriptional activator of several progesteron-dependent promoters in a variety of cell types. Involved in activation of SRC-dependent MAPK signaling on hormone stimulation. In Sapajus apella (Brown-capped capuchin), this protein is Progesterone receptor (PGR).